The chain runs to 425 residues: GTPase Obg (425 aa).

The region spanning 1–158 is the Obg domain; sequence MFIDKAKIYV…REIILELKLL (158 aa). In terms of domain architecture, OBG-type G spans 159–331; sequence ADVGLVGFPN…LMAEVSKTLA (173 aa). GTP contacts are provided by residues 165–172, 190–194, 212–215, 282–285, and 312–314; these read GFPNVGKS, FTTLK, DIPG, NKSD, and SAA. Positions 172 and 192 each coordinate Mg(2+). The 81-residue stretch at 345–425 folds into the OCT domain; that stretch reads LFIPEEKRFT…LNDFEFEFVI (81 aa).

The protein belongs to the TRAFAC class OBG-HflX-like GTPase superfamily. OBG GTPase family. Monomer. Mg(2+) serves as cofactor.

The protein resides in the cytoplasm. In terms of biological role, an essential GTPase which binds GTP, GDP and possibly (p)ppGpp with moderate affinity, with high nucleotide exchange rates and a fairly low GTP hydrolysis rate. Plays a role in control of the cell cycle, stress response, ribosome biogenesis and in those bacteria that undergo differentiation, in morphogenesis control. This chain is GTPase Obg, found in Clostridium tetani (strain Massachusetts / E88).